The sequence spans 468 residues: MELHRCSLLALLLAVTCSVAVAYDPLDPKGNITIKWDVISWTPDGYVAMVTMSNYQMYRQILAPGWTVGWSWAKKEVIWSIVGAQATEQGDCSKFKGGIPHSCKRTPAIVDLLPGVPYNQQIANCCKAGVVSAYGQDPAGSVSAFQVSVGLAGTTNKTVKLPTNFTLAGPGPGYTCGPATIVPSTVYLTPDRRRRTQALMTWTVTCTYSQQLASRYPTCCVSFSSFYNSTIVPCARCACGCGHDGYRGNGGGGKNARAGDGRSRRNSGGGGGHSGGTECIMGDSKRALSAGVNTPRKDGAPLLQCTSHMCPIRVHWHVKLNYKDYWRAKIAITNFNYRMNYTQWTLVAQHPNLNNVTEVFSFQYKPLLPYGNINDTGMFYGLKFYNDLLMEAGPFGNVQSEVLMRKDYNTFTFSQGWAFPRKIYFNGDECKMPPPDSYPYLPNSAPIGPPRSVAAAASAILVVLLLVA.

Residues 1–22 (MELHRCSLLALLLAVTCSVAVA) form the signal peptide. N-linked (GlcNAc...) asparagine glycans are attached at residues Asn-31, Asn-156, Asn-164, and Asn-228. The interval 251–278 (GGGKNARAGDGRSRRNSGGGGGHSGGTE) is disordered. Residues Asn-340, Asn-355, and Asn-374 are each glycosylated (N-linked (GlcNAc...) asparagine). Asn-443 carries GPI-anchor amidated asparagine lipidation. Residues 444–468 (SAPIGPPRSVAAAASAILVVLLLVA) constitute a propeptide, removed in mature form.

The protein belongs to the COBRA family. Expressed mainly in developing sclerenchyma cells and in vascular bundles.

The protein localises to the cell membrane. Involved in determining the orientation of cell expansion, probably by playing an important role in cellulose deposition. May act by recruiting cellulose synthesizing complexes to discrete positions on the cell surface. In Oryza sativa subsp. indica (Rice), this protein is COBRA-like protein 5 (BC1).